Here is a 278-residue protein sequence, read N- to C-terminus: Tetraspanin-13 (278 aa).

Over 1–25 (MARDKEDQNNENPSIVQNMSFPFNT) the chain is Cytoplasmic. Residues 26-46 (IFLISSAIFLVTAAFWFVAVM) form a helical membrane-spanning segment. The Extracellular segment spans residues 47-62 (TLHYRTDECNRFVTTP). A helical transmembrane segment spans residues 63-83 (GIFISFSLLAMSLTGFYAAYF). At 84–92 (KSDCLFRIH) the chain is on the cytoplasmic side. Residues 93–113 (FFIFFLWMFVVVSKAIFVIFL) form a helical membrane-spanning segment. At 114–249 (HKETNPRLFP…DVHNTSFSIT (136 aa)) the chain is on the extracellular side. 3 N-linked (GlcNAc...) asparagine glycosylation sites follow: Asn-202, Asn-220, and Asn-243. The helical transmembrane segment at 250–270 (VNIIHIIFSLCIGMTGWFAWL) threads the bilayer. Residues 271 to 278 (RILRESQK) lie on the Cytoplasmic side of the membrane.

Belongs to the tetraspanin (TM4SF) family.

The protein resides in the membrane. In terms of biological role, may be involved in the regulation of cell differentiation. The protein is Tetraspanin-13 (TET13) of Arabidopsis thaliana (Mouse-ear cress).